Reading from the N-terminus, the 660-residue chain is Zinc transporter ZIP4 (660 aa).

The N-terminal stretch at 1 to 22 is a signal peptide; it reads MLPKSVTQGLVLALLVGTVAVA. Over 23–337 the chain is Extracellular; the sequence is RPRNLLSLLA…QDQLSQTERY (315 aa). 3 disulfides stabilise this stretch: Cys56–Cys61, Cys64–Cys110, and Cys160–Cys195. N-linked (GlcNAc...) asparagine glycans are attached at residues Asn192 and Asn219. The tract at residues 233–273 is disordered; that stretch reads GVGGEDHSDHDDHGDHADHSHPDRKASHQDSELHTPHNSNS. Positions 236–267 are enriched in basic and acidic residues; that stretch reads GEDHSDHDDHGDHADHSHPDRKASHQDSELHT. Residue Asn272 is glycosylated (N-linked (GlcNAc...) asparagine). A disulfide bond links Cys280 and Cys319. Residues 338–358 form a helical membrane-spanning segment; it reads LYGSLATLLICLCAVFGLLLL. The Cytoplasmic segment spans residues 359–376; it reads TCAKCSTATHYIMQTFLS. A helical membrane pass occupies residues 377–397; the sequence is LAVGALTGDALLHLIPKVLGL. Topologically, residues 398–420 are extracellular; sequence HTHGGEGHTHEEEVGVGGQATWR. The helical transmembrane segment at 421–441 threads the bilayer; the sequence is LLAVLGGFYIFFLFESFFNLL. Over 442-511 the chain is Cytoplasmic; that stretch reads LPRDQDSEKD…LRAELRLLPY (70 aa). The Essential for SLC39A4 endocytosis signature appears at 465–467; sequence LQL. The chain crosses the membrane as a helical span at residues 512–531; it reads LITLGDAVHNFADGLAVGAA. Positions 520, 521, and 524 each coordinate Zn(2+). At 532 to 539 the chain is on the extracellular side; the sequence is FSSSWKTG. Residues 540–566 form a helical membrane-spanning segment; it reads LATSLAVFCHELPHELGDFAALLHAGL. Zn(2+) contacts are provided by His549, Glu550, and His553. The Cytoplasmic segment spans residues 567–571; the sequence is SVKRA. Residues 572-592 traverse the membrane as a helical segment; sequence LLLNLASALTAFAGLYVALAV. At 593–599 the chain is on the extracellular side; it reads GVGEEGE. The chain crosses the membrane as a helical span at residues 600–620; that stretch reads AWILAVATGLFLYVALCDMLP. Residues 621-630 are Cytoplasmic-facing; that stretch reads AMMNVRDQRP. The helical transmembrane segment at 631-651 threads the bilayer; sequence WLLFLLHNVGLLGGWTVLLLL. Residues 652 to 660 are Extracellular-facing; it reads SLYEDNITF. The N-linked (GlcNAc...) asparagine glycan is linked to Asn657.

Belongs to the ZIP transporter (TC 2.A.5) family. As to quaternary structure, homodimer. Homodimerization is mediated by the transmembrane domain. The extracellular N-terminal ectodomain is cleaved when cells are Zn(2+) deficient, N-terminally cleaved SLC39A4 is then internalized faster. In terms of processing, under excess Zn(2+) conditions, SLC39A4 on the cell surface is rapidly endocytosed, ubiquitinated, and degraded. Post-translationally, N-glycosylated. In terms of tissue distribution, highly expressed in the small intestine and embryonic visceral yolk sac. Weakly expressed in the stomach and liver.

Its subcellular location is the cell membrane. The protein localises to the recycling endosome membrane. It is found in the apical cell membrane. It carries out the reaction Zn(2+)(in) = Zn(2+)(out). Functionally, selective transporter that mediates the uptake of Zn(2+). Plays an essential role for dietary zinc uptake from small intestine. The Zn(2+) uniporter activity is regulated by zinc availability. Also exhibits polyspecific binding and transport of Cu(2+), Cd(2+) and possibly Ni(2+) but at higher concentrations. In Mus musculus (Mouse), this protein is Zinc transporter ZIP4 (Slc39a4).